Reading from the N-terminus, the 261-residue chain is Cytochrome c oxidase subunit 3 (261 aa).

At 1-15 (MTHQTHSYHMVNPSP) the chain is on the mitochondrial matrix side. Residues 16–34 (WPLTGALSALLMTSGLIMW) form a helical membrane-spanning segment. Over 35–40 (FHFNSM) the chain is Mitochondrial intermembrane. The helical transmembrane segment at 41 to 66 (ILLTLGLSTNILTMYQWWRDIIREST) threads the bilayer. Topologically, residues 67–72 (FQGHHT) are mitochondrial matrix. The chain crosses the membrane as a helical span at residues 73 to 105 (PTVQKGLRYGMILFIVSEVLFFTGFFWAFYHSS). Residues 106-128 (LAPTPELGGCWPPTGIHPLNPLE) are Mitochondrial intermembrane-facing. Residues 129–152 (VPLLNTSVLLASGVSITWAHHSLM) form a helical membrane-spanning segment. The Mitochondrial matrix portion of the chain corresponds to 153–155 (EGN). Residues 156–183 (RKHMLQALFITIALGLYFTLLQASEYYE) traverse the membrane as a helical segment. At 184–190 (APFTISD) the chain is on the mitochondrial intermembrane side. Residues 191-223 (GIYGSTFFVATGFHGLHVIIGSTFLIVCFLRQV) traverse the membrane as a helical segment. Residues 224 to 232 (KFHFTSNHH) lie on the Mitochondrial matrix side of the membrane. Residues 233–256 (FGFERAAWYWHFVDVVWLFLYVSI) traverse the membrane as a helical segment. At 257 to 261 (YWWGS) the chain is on the mitochondrial intermembrane side.

Belongs to the cytochrome c oxidase subunit 3 family. Component of the cytochrome c oxidase (complex IV, CIV), a multisubunit enzyme composed of 14 subunits. The complex is composed of a catalytic core of 3 subunits MT-CO1, MT-CO2 and MT-CO3, encoded in the mitochondrial DNA, and 11 supernumerary subunits COX4I, COX5A, COX5B, COX6A, COX6B, COX6C, COX7A, COX7B, COX7C, COX8 and NDUFA4, which are encoded in the nuclear genome. The complex exists as a monomer or a dimer and forms supercomplexes (SCs) in the inner mitochondrial membrane with NADH-ubiquinone oxidoreductase (complex I, CI) and ubiquinol-cytochrome c oxidoreductase (cytochrome b-c1 complex, complex III, CIII), resulting in different assemblies (supercomplex SCI(1)III(2)IV(1) and megacomplex MCI(2)III(2)IV(2)).

The protein resides in the mitochondrion inner membrane. The enzyme catalyses 4 Fe(II)-[cytochrome c] + O2 + 8 H(+)(in) = 4 Fe(III)-[cytochrome c] + 2 H2O + 4 H(+)(out). Component of the cytochrome c oxidase, the last enzyme in the mitochondrial electron transport chain which drives oxidative phosphorylation. The respiratory chain contains 3 multisubunit complexes succinate dehydrogenase (complex II, CII), ubiquinol-cytochrome c oxidoreductase (cytochrome b-c1 complex, complex III, CIII) and cytochrome c oxidase (complex IV, CIV), that cooperate to transfer electrons derived from NADH and succinate to molecular oxygen, creating an electrochemical gradient over the inner membrane that drives transmembrane transport and the ATP synthase. Cytochrome c oxidase is the component of the respiratory chain that catalyzes the reduction of oxygen to water. Electrons originating from reduced cytochrome c in the intermembrane space (IMS) are transferred via the dinuclear copper A center (CU(A)) of subunit 2 and heme A of subunit 1 to the active site in subunit 1, a binuclear center (BNC) formed by heme A3 and copper B (CU(B)). The BNC reduces molecular oxygen to 2 water molecules using 4 electrons from cytochrome c in the IMS and 4 protons from the mitochondrial matrix. In Balaenoptera musculus (Blue whale), this protein is Cytochrome c oxidase subunit 3 (MT-CO3).